The following is a 115-amino-acid chain: NADH-ubiquinone oxidoreductase chain 3 (115 aa).

3 helical membrane-spanning segments follow: residues 4-24 (LLVLLVNSILSLLLILIAFWL), 55-75 (FFLVAITFLLFDLEIALLLPL), and 87-107 (MTLTSFILISVLALGLAYEWL).

It belongs to the complex I subunit 3 family. Core subunit of respiratory chain NADH dehydrogenase (Complex I) which is composed of 45 different subunits. Interacts with TMEM186. Interacts with TMEM242.

The protein resides in the mitochondrion inner membrane. It carries out the reaction a ubiquinone + NADH + 5 H(+)(in) = a ubiquinol + NAD(+) + 4 H(+)(out). In terms of biological role, core subunit of the mitochondrial membrane respiratory chain NADH dehydrogenase (Complex I) which catalyzes electron transfer from NADH through the respiratory chain, using ubiquinone as an electron acceptor. Essential for the catalytic activity of complex I. The chain is NADH-ubiquinone oxidoreductase chain 3 from Peromyscus eremicus (Cactus mouse).